Consider the following 804-residue polypeptide: Probable exo-1,4-beta-xylosidase xlnD (804 aa).

The first 26 residues, Met-1 to Ala-26, serve as a signal peptide directing secretion. Asn-29, Asn-124, Asn-148, Asn-242, and Asn-251 each carry an N-linked (GlcNAc...) asparagine glycan. Asp-315 is an active-site residue. N-linked (GlcNAc...) asparagine glycans are attached at residues Asn-357, Asn-390, Asn-413, Asn-444, Asn-455, Asn-573, Asn-576, Asn-665, Asn-696, and Asn-718.

It belongs to the glycosyl hydrolase 3 family.

Its subcellular location is the secreted. The enzyme catalyses Hydrolysis of (1-&gt;4)-beta-D-xylans, to remove successive D-xylose residues from the non-reducing termini.. It participates in glycan degradation; xylan degradation. In terms of biological role, xylan 1,4-beta-xylosidase involved in the hydrolysis of xylan, a major structural heterogeneous polysaccharide found in plant biomass representing the second most abundant polysaccharide in the biosphere, after cellulose. This Aspergillus niger (strain ATCC MYA-4892 / CBS 513.88 / FGSC A1513) protein is Probable exo-1,4-beta-xylosidase xlnD (xlnD).